The primary structure comprises 357 residues: H-2 class I histocompatibility antigen, D-37 alpha chain (357 aa).

The N-terminal stretch at 1–20 (MLLFAHLLQLLVSATVPTQS) is a signal peptide. The alpha-1 stretch occupies residues 21–110 (SPHSLRYFTT…LLGYYNQSND (90 aa)). The Extracellular segment spans residues 21–304 (SPHSLRYFTT…EPPPSTVSNM (284 aa)). Asn-106 carries an N-linked (GlcNAc...) asparagine glycan. Residues 111 to 202 (ESHTLQWMYG…RLGNETLQRS (92 aa)) form an alpha-2 region. A disulfide bond links Cys-121 and Cys-184. N-linked (GlcNAc...) asparagine glycosylation occurs at Asn-196. The alpha-3 stretch occupies residues 203–294 (DPPKAHVTHH…GLPEPLTLRW (92 aa)). In terms of domain architecture, Ig-like C1-type spans 205 to 293 (PKAHVTHHPR…EGLPEPLTLR (89 aa)). Residues Cys-223 and Cys-279 are joined by a disulfide bond. The tract at residues 295–304 (EPPPSTVSNM) is connecting peptide. Residues 305 to 327 (VIIAVLVVLGAVIILGAVVAFVM) form a helical membrane-spanning segment. Residues 328-357 (KRRRHIGVKGCYAHVLGSKSFQTSDWPQKA) are Cytoplasmic-facing. Ser-347 bears the Phosphoserine mark.

This sequence belongs to the MHC class I family. Heterodimer of an alpha chain and a beta chain (beta-2-microglobulin).

Its subcellular location is the membrane. In terms of biological role, involved in the presentation of foreign antigens to the immune system. The polypeptide is H-2 class I histocompatibility antigen, D-37 alpha chain (H2-T23) (Mus musculus (Mouse)).